A 545-amino-acid polypeptide reads, in one-letter code: Serine/threonine-protein kinase PAK 1 (545 aa).

The disordered stretch occupies residues 1-75; sequence MSNNGVDIQD…KKREKERPEI (75 aa). N-acetylserine is present on Ser-2. Ser-21 carries the phosphoserine; by PKB and autocatalysis modification. Phosphoserine; by autocatalysis is present on Ser-57. Positions 70–140 are autoregulatory region; the sequence is KERPEISLPS…YNSKKTSNSK (71 aa). In terms of domain architecture, CRIB spans 75–88; sequence ISLPSDFEHTIHVG. The interval 75-105 is GTPase-binding; the sequence is ISLPSDFEHTIHVGFDAVTGEFTGMPEQWAR. Position 84 is a phosphothreonine; by OXSR1 (Thr-84). The residue at position 115 (Ser-115) is a Phosphoserine. Phosphotyrosine occurs at positions 131 and 142. Phosphoserine; by autocatalysis occurs at positions 144 and 149. A disordered region spans residues 150-198; the sequence is AEDYNSSNTLNVKTVSETPAVPPVSEDDEDDDDDATPPPVIAPRPEHTK. A compositionally biased stretch (polar residues) spans 152–166; that stretch reads DYNSSNTLNVKTVSE. Tyr-153 carries the phosphotyrosine; by JAK2 modification. Ser-174 bears the Phosphoserine mark. A compositionally biased stretch (acidic residues) spans 174-184; that stretch reads SEDDEDDDDDA. Position 185 is a phosphothreonine (Thr-185). The residue at position 199 (Ser-199) is a Phosphoserine; by autocatalysis. Tyr-201 carries the phosphotyrosine; by JAK2 modification. A Phosphoserine; by autocatalysis modification is found at Ser-204. The segment at 210-250 is disordered; the sequence is PVTPTRDVATSPISPTENNTTPPDALTRNTEKQKKKPKMSD. Thr-212 and Thr-219 each carry phosphothreonine. Residues Ser-220 and Ser-223 each carry the phosphoserine modification. A compositionally biased stretch (polar residues) spans 220–231; it reads SPISPTENNTTP. 3 positions are modified to phosphothreonine: Thr-225, Thr-229, and Thr-230. Residues 270–521 enclose the Protein kinase domain; it reads YTPFEKIGQG…AKELLQHQFL (252 aa). 276-284 provides a ligand contact to ATP; that stretch reads IGQGASGTV. A Phosphotyrosine; by JAK2 modification is found at Tyr-285. Lys-299 contributes to the ATP binding site. The active-site Proton acceptor is Asp-389. Thr-423 bears the Phosphothreonine; by autocatalysis, BRSK2 and PDPK1 mark.

This sequence belongs to the protein kinase superfamily. STE Ser/Thr protein kinase family. STE20 subfamily. As to quaternary structure, homodimer in its autoinhibited state. Active as monomer. Interacts with GIT1. Component of cytoplasmic complexes, which also contains PXN, ARHGEF7 and GIT1. Interacts with NISCH. Interacts with DVL1; mediates the formation of a DVL1, MUSK and PAK1 ternary complex involved in AChR clustering. Binds to the caspase-cleaved p110 isoform of CDC2L1 and CDC2L2, p110C, but not the full-length proteins. Interacts with ARHGEF7. Interacts tightly with GTP-bound but not GDP-bound CDC42/P21 and RAC1. Interacts with SCRIB. Interacts with PDPK1. Interacts (via kinase domain) with RAF1. Interacts with NCK1 and NCK2. Interacts with TBCB. Interacts with BRSK2. Interacts with SNAI1. Interacts with CIB1 (via N-terminal region); the interaction is direct, promotes PAK1 activity and occurs in a calcium-dependent manner. Interacts with INPP5K. Interacts with gamma-tubulin. Interacts with RHOU; the interaction promotes PAK1 activation. Requires Mg(2+) as cofactor. Autophosphorylated in trans, meaning that in a dimer, one kinase molecule phosphorylates the other one. Activated by autophosphorylation at Thr-423 in response to a conformation change, triggered by interaction with GTP-bound CDC42 or RAC1. Activated by phosphorylation at Thr-423 by BRSK2 and by PDPK1. Phosphorylated by JAK2 in response to PRL; this increases PAK1 kinase activity. Phosphorylated at Ser-21 by PKB/AKT; this reduces interaction with NCK1 and association with focal adhesion sites. Upon DNA damage, phosphorylated at Thr-212 and translocates to the nucleoplasm. Phosphorylated at tyrosine residues, which can be enhanced by NTN1.

The protein localises to the cytoplasm. It is found in the cell junction. Its subcellular location is the focal adhesion. The protein resides in the cell projection. It localises to the lamellipodium. The protein localises to the cell membrane. It is found in the ruffle membrane. Its subcellular location is the invadopodium. The protein resides in the nucleus. It localises to the nucleoplasm. The protein localises to the chromosome. It is found in the cytoskeleton. Its subcellular location is the microtubule organizing center. The protein resides in the centrosome. The enzyme catalyses L-seryl-[protein] + ATP = O-phospho-L-seryl-[protein] + ADP + H(+). It carries out the reaction L-threonyl-[protein] + ATP = O-phospho-L-threonyl-[protein] + ADP + H(+). Phosphorylation of Thr-84 by OXSR1 inhibits activation. Activated by binding small G proteins. Binding of GTP-bound CDC42 or RAC1 to the autoregulatory region releases monomers from the autoinhibited dimer, and enables activation by phosphorylation of Thr-423. In terms of biological role, protein kinase involved in intracellular signaling pathways downstream of integrins and receptor-type kinases that plays an important role in cytoskeleton dynamics, in cell adhesion, migration, proliferation, apoptosis, mitosis, and in vesicle-mediated transport processes. Can directly phosphorylate BAD and protects cells against apoptosis. Activated by interaction with CDC42 and RAC1. Functions as a GTPase effector that links the Rho-related GTPases CDC42 and RAC1 to the JNK MAP kinase pathway. Phosphorylates and activates MAP2K1, and thereby mediates activation of downstream MAP kinases. Involved in the reorganization of the actin cytoskeleton, actin stress fibers and of focal adhesion complexes. Phosphorylates the tubulin chaperone TBCB and thereby plays a role in the regulation of microtubule biogenesis and organization of the tubulin cytoskeleton. Plays a role in the regulation of insulin secretion in response to elevated glucose levels. Part of a ternary complex that contains PAK1, DVL1 and MUSK that is important for MUSK-dependent regulation of AChR clustering during the formation of the neuromuscular junction (NMJ). Activity is inhibited in cells undergoing apoptosis, potentially due to binding of CDC2L1 and CDC2L2. Phosphorylates MYL9/MLC2. Phosphorylates RAF1 at 'Ser-338' and 'Ser-339' resulting in: activation of RAF1, stimulation of RAF1 translocation to mitochondria, phosphorylation of BAD by RAF1, and RAF1 binding to BCL2. Phosphorylates SNAI1 at 'Ser-246' promoting its transcriptional repressor activity by increasing its accumulation in the nucleus. In podocytes, promotes NR3C2 nuclear localization. Required for atypical chemokine receptor ACKR2-induced phosphorylation of LIMK1 and cofilin (CFL1) and for the up-regulation of ACKR2 from endosomal compartment to cell membrane, increasing its efficiency in chemokine uptake and degradation. In synapses, seems to mediate the regulation of F-actin cluster formation performed by SHANK3, maybe through CFL1 phosphorylation and inactivation. Plays a role in RUFY3-mediated facilitating gastric cancer cells migration and invasion. In response to DNA damage, phosphorylates MORC2 which activates its ATPase activity and facilitates chromatin remodeling. In neurons, plays a crucial role in regulating GABA(A) receptor synaptic stability and hence GABAergic inhibitory synaptic transmission through its role in F-actin stabilization. In hippocampal neurons, necessary for the formation of dendritic spines and excitatory synapses; this function is dependent on kinase activity and may be exerted by the regulation of actomyosin contractility through the phosphorylation of myosin II regulatory light chain (MLC). Along with GIT1, positively regulates microtubule nucleation during interphase. Phosphorylates FXR1, promoting its localization to stress granules and activity. Phosphorylates ILK on 'Thr-173' and 'Ser-246', promoting nuclear export of ILK. This is Serine/threonine-protein kinase PAK 1 from Mus musculus (Mouse).